The chain runs to 28 residues: Heat shock protein 81 (28 aa).

Residues Asn-5 and Asp-21 each coordinate ATP.

Belongs to the heat shock protein 90 family. As to quaternary structure, homodimer.

Its subcellular location is the cytoplasm. Its function is as follows. Putative molecular chaperone that may promote the maturation, structural maintenance and proper regulation of specific target proteins. The protein is Heat shock protein 81 of Pseudotsuga menziesii (Douglas-fir).